A 382-amino-acid chain; its full sequence is Lipid-A-disaccharide synthase (382 aa).

This sequence belongs to the LpxB family.

It carries out the reaction 2-N,3-O-bis[(3R)-3-hydroxytetradecanoyl]-alpha-D-glucosaminyl 1-phosphate + UDP-2-N,3-O-bis[(3R)-3-hydroxytetradecanoyl]-alpha-D-glucosamine = lipid A disaccharide (E. coli) + UDP + H(+). It catalyses the reaction a lipid X + a UDP-2-N,3-O-bis[(3R)-3-hydroxyacyl]-alpha-D-glucosamine = a lipid A disaccharide + UDP + H(+). Its pathway is glycolipid biosynthesis; lipid IV(A) biosynthesis; lipid IV(A) from (3R)-3-hydroxytetradecanoyl-[acyl-carrier-protein] and UDP-N-acetyl-alpha-D-glucosamine: step 5/6. In terms of biological role, condensation of UDP-2,3-diacylglucosamine and 2,3-diacylglucosamine-1-phosphate to form lipid A disaccharide, a precursor of lipid A, a phosphorylated glycolipid that anchors the lipopolysaccharide to the outer membrane of the cell. The protein is Lipid-A-disaccharide synthase of Escherichia coli O45:K1 (strain S88 / ExPEC).